A 164-amino-acid chain; its full sequence is Cyclic pyranopterin monophosphate synthase (164 aa).

Substrate is bound by residues 77-79 (LCH) and 115-116 (ME). Asp130 is a catalytic residue.

Belongs to the MoaC family. In terms of assembly, homohexamer; trimer of dimers.

The catalysed reaction is (8S)-3',8-cyclo-7,8-dihydroguanosine 5'-triphosphate = cyclic pyranopterin phosphate + diphosphate. It functions in the pathway cofactor biosynthesis; molybdopterin biosynthesis. Functionally, catalyzes the conversion of (8S)-3',8-cyclo-7,8-dihydroguanosine 5'-triphosphate to cyclic pyranopterin monophosphate (cPMP). This is Cyclic pyranopterin monophosphate synthase from Rhizobium meliloti (strain 1021) (Ensifer meliloti).